A 280-amino-acid chain; its full sequence is H-2 class II histocompatibility antigen gamma chain (280 aa).

Residues 1–30 are Cytoplasmic-facing; it reads MDDQRDLISNHEQLPILGQRARAPESNCNR. S9 bears the Phosphoserine mark. A helical; Signal-anchor for type II membrane protein membrane pass occupies residues 31–56; sequence GVLYTSVSVLVALLLAGQATTAYFLY. Topologically, residues 57 to 280 are extracellular; it reads QQQGRLDKLT…TKQDMGQMFL (224 aa). Residues N114 and N120 are each glycosylated (N-linked (GlcNAc...) asparagine). Residues 194–255 enclose the Thyroglobulin type-1 domain; that stretch reads LTKCQEEVSH…HTKSRGRHNC (62 aa). Cystine bridges form between C197–C216, C227–C234, and C236–C255. The segment at 246–268 is disordered; it reads HTKSRGRHNCSEPLDMEDPSSGL. Residue S266 is glycosylated (O-linked (Xyl...) (chondroitin sulfate) serine).

Nonamer composed of three alpha/beta/gamma heterotrimers. Interacts with CD44; this complex is essential for the MIF-induced signaling cascade that results in B cell survival. In terms of assembly, interacts with the mature form of CTSL; the complex survive in neutral pH environment.

It is found in the late endosome. It localises to the lysosome. The protein resides in the cell membrane. The protein localises to the endoplasmic reticulum membrane. Its subcellular location is the golgi apparatus. It is found in the trans-Golgi network. It localises to the endosome. The protein resides in the secreted. Plays a critical role in MHC class II antigen processing by stabilizing peptide-free class II alpha/beta heterodimers in a complex soon after their synthesis and directing transport of the complex from the endoplasmic reticulum to compartments where peptide loading of class II takes place. Enhance also the stimulation of T-cell responses through interaction with CD44. Functionally, binds to the peptide-binding site of MHC class II alpha/beta heterodimers forming an alpha-beta-CLIP complex, thereby preventing the loading of antigenic peptides to the MHC class II complex until its release by HLA-DM in the endosome. In terms of biological role, stabilizes the conformation of mature CTSL by binding to its active site and serving as a chaperone to help maintain a pool of mature enzyme in endocytic compartments and extracellular space of antigen-presenting cells (APCs). The sequence is that of H-2 class II histocompatibility antigen gamma chain from Rattus norvegicus (Rat).